The chain runs to 308 residues: Glutaminase (308 aa).

Substrate is bound by residues Ser66, Asn117, Glu161, Asn168, Tyr192, Tyr244, and Val262.

The protein belongs to the glutaminase family. In terms of assembly, homotetramer.

The catalysed reaction is L-glutamine + H2O = L-glutamate + NH4(+). The sequence is that of Glutaminase from Salmonella dublin (strain CT_02021853).